The chain runs to 426 residues: Molybdopterin molybdenumtransferase 1 (426 aa).

This sequence belongs to the MoeA family. It depends on Mg(2+) as a cofactor.

The enzyme catalyses adenylyl-molybdopterin + molybdate = Mo-molybdopterin + AMP + H(+). It participates in cofactor biosynthesis; molybdopterin biosynthesis. In terms of biological role, catalyzes the insertion of molybdate into adenylated molybdopterin with the concomitant release of AMP. This chain is Molybdopterin molybdenumtransferase 1 (moeA1), found in Mycobacterium tuberculosis (strain ATCC 25618 / H37Rv).